Consider the following 298-residue polypeptide: tRNA pseudouridine synthase B (298 aa).

D45 serves as the catalytic Nucleophile.

This sequence belongs to the pseudouridine synthase TruB family. Type 1 subfamily.

It carries out the reaction uridine(55) in tRNA = pseudouridine(55) in tRNA. Responsible for synthesis of pseudouridine from uracil-55 in the psi GC loop of transfer RNAs. The polypeptide is tRNA pseudouridine synthase B (Thiobacillus denitrificans (strain ATCC 25259 / T1)).